A 639-amino-acid chain; its full sequence is Chaperone protein DnaK (639 aa).

Phosphothreonine; by autocatalysis is present on Thr198. A compositionally biased stretch (low complexity) spans 603–618 (AKAQTQGGAQEGAAKQ). The tract at residues 603–639 (AKAQTQGGAQEGAAKQSNATADDVVDAEFEEVKDDKK) is disordered. A compositionally biased stretch (acidic residues) spans 625 to 639 (DVVDAEFEEVKDDKK).

This sequence belongs to the heat shock protein 70 family.

Its function is as follows. Acts as a chaperone. The polypeptide is Chaperone protein DnaK (Shewanella oneidensis (strain ATCC 700550 / JCM 31522 / CIP 106686 / LMG 19005 / NCIMB 14063 / MR-1)).